Consider the following 134-residue polypeptide: ATP synthase epsilon chain, chloroplastic (134 aa).

Belongs to the ATPase epsilon chain family. F-type ATPases have 2 components, CF(1) - the catalytic core - and CF(0) - the membrane proton channel. CF(1) has five subunits: alpha(3), beta(3), gamma(1), delta(1), epsilon(1). CF(0) has three main subunits: a, b and c.

It localises to the plastid. It is found in the chloroplast thylakoid membrane. Functionally, produces ATP from ADP in the presence of a proton gradient across the membrane. The polypeptide is ATP synthase epsilon chain, chloroplastic (Drimys granadensis).